A 297-amino-acid polypeptide reads, in one-letter code: 5'-3' exonuclease (297 aa).

Positions 171–262 (EPDQIVDFKA…MKLEKELFAI (92 aa)) constitute a 5'-3' exonuclease domain.

Functionally, 5'-3' exonuclease acting preferentially on double-stranded DNA. The chain is 5'-3' exonuclease (polA) from Mycoplasmopsis pulmonis (strain UAB CTIP) (Mycoplasma pulmonis).